Here is a 623-residue protein sequence, read N- to C-terminus: Low affinity potassium transport system protein Kup (623 aa).

The next 12 membrane-spanning stretches (helical) occupy residues 10–30 (LSAVTLAAIGVVYGDIGTSPL), 47–67 (PDVVFGFLSLIFWMLILIVSV), 102–122 (ILVILGLIGGSFFYGEVVITP), 138–158 (PALDPYIVPCSIAVLTLLFVI), 166–186 (VGKLFAPVMLVWFLTLALLGL), 214–234 (VSFFALGAVVLAITGVEALYA), 248–268 (WFTVVLPSLVLNYFGQGALLL), 277–297 (PFFLLAPDWALIPLLILATLA), 338–358 (IYIPVINWTLYLAVVLVIVGF), 364–384 (LAAAYGIAVTGTMVITSVLFC), 396–416 (FFVYFLLVALLVIDVPMFSAN), and 420–440 (LFSGGWLPLSLGLVMFIIMTT).

Belongs to the HAK/KUP transporter (TC 2.A.72) family.

It is found in the cell inner membrane. The catalysed reaction is K(+)(in) + H(+)(in) = K(+)(out) + H(+)(out). Responsible for the low-affinity transport of potassium into the cell. Likely operates as a K(+):H(+) symporter. The sequence is that of Low affinity potassium transport system protein Kup from Yersinia enterocolitica serotype O:8 / biotype 1B (strain NCTC 13174 / 8081).